Consider the following 1323-residue polypeptide: PAS domain-containing serine/threonine-protein kinase (1323 aa).

At Met-1 the chain carries N-acetylmethionine. The residue at position 19 (Ser-19) is a Phosphoserine. A disordered region spans residues 20–47 (LPLPVSAEGPAAQTTAEPSRSFSSAHRH). The segment covering 31–43 (AQTTAEPSRSFSS) has biased composition (polar residues). The residue at position 34 (Thr-34) is a Phosphothreonine. PAS domains lie at 119–190 (SSPL…MEAD) and 335–402 (YRAS…SLQL). Ser-582 is subject to Phosphoserine. Residues 837–857 (AASDRESPGHVPSTLDAGPED) are disordered. A Phosphoserine modification is found at Ser-939. Residues 999 to 1251 (YSTMSPLGSG…LEKLVTDPWV (253 aa)) form the Protein kinase domain. ATP contacts are provided by residues 1005 to 1013 (LGSGAFGFV), Lys-1028, and 1082 to 1089 (EKHGSGLD). Asp-1128 (proton acceptor) is an active-site residue. Asp-1146 serves as a coordination point for ATP. Thr-1161 and Thr-1165 each carry phosphothreonine; by autocatalysis. The segment at 1298-1323 (CGGPVPGEAPNGQGCLHPGDPRLLTS) is disordered.

Belongs to the protein kinase superfamily. CAMK Ser/Thr protein kinase family. In terms of processing, autophosphorylated on Thr-1161 and Thr-1165. Autophosphorylation is activated by phospholipids. In terms of tissue distribution, ubiquitously expressed, with slightly higher expression in brain, prostate and testis. Reduced expression was found in placenta. Present in germ cells of testis and in the midpiece of sperm tails (at protein level).

Its subcellular location is the cytoplasm. It localises to the nucleus. It carries out the reaction L-seryl-[protein] + ATP = O-phospho-L-seryl-[protein] + ADP + H(+). It catalyses the reaction L-threonyl-[protein] + ATP = O-phospho-L-threonyl-[protein] + ADP + H(+). With respect to regulation, protein kinase activity is inhibited by the first PAS domain: binding of an unidentified ligand desinhibits the protein kinase activity. May be activated by autophosphorylation on Thr-1161 and Thr-1165. The activating role of autophosphorylation at Thr-1161 is unclear: according to a report, autophosphorylation at Thr-1161 does not play a major role in activation. Autophosphorylation is enhanced upon phosphatidylinositol monophosphate (phosphatidylinositol 4-phosphate) binding and inhibited upon phosphatidylinositol bi- and tri-phosphate binding. In contrast, phosphorylation of target proteins is inhibited upon all phosphatidylinositol-binding (phosphatidylinositol mono- bi- and tri-phosphate). Its function is as follows. Serine/threonine-protein kinase involved in energy homeostasis and protein translation. Phosphorylates EEF1A1, GYS1, PDX1 and RPS6. Probably plays a role under changing environmental conditions (oxygen, glucose, nutrition), rather than under standard conditions. Acts as a sensor involved in energy homeostasis: regulates glycogen synthase synthesis by mediating phosphorylation of GYS1, leading to GYS1 inactivation. May be involved in glucose-stimulated insulin production in pancreas and regulation of glucagon secretion by glucose in alpha cells; however such data require additional evidences. May play a role in regulation of protein translation by phosphorylating EEF1A1, leading to increase translation efficiency. May also participate in respiratory regulation. This is PAS domain-containing serine/threonine-protein kinase (PASK) from Homo sapiens (Human).